Reading from the N-terminus, the 378-residue chain is Ribosomal RNA large subunit methyltransferase G (378 aa).

It belongs to the methyltransferase superfamily. RlmG family.

The protein resides in the cytoplasm. It catalyses the reaction guanosine(1835) in 23S rRNA + S-adenosyl-L-methionine = N(2)-methylguanosine(1835) in 23S rRNA + S-adenosyl-L-homocysteine + H(+). Its function is as follows. Specifically methylates the guanine in position 1835 (m2G1835) of 23S rRNA. This Salmonella arizonae (strain ATCC BAA-731 / CDC346-86 / RSK2980) protein is Ribosomal RNA large subunit methyltransferase G.